Here is a 227-residue protein sequence, read N- to C-terminus: PKHD-type hydroxylase Dtpsy_0528 (227 aa).

The region spanning 78–178 is the Fe2OG dioxygenase domain; that stretch reads TIYPPKFNRY…RVASFFWIES (101 aa). Residues histidine 96, aspartate 98, and histidine 159 each coordinate Fe cation. Arginine 169 contacts 2-oxoglutarate.

Fe(2+) is required as a cofactor. L-ascorbate serves as cofactor.

The polypeptide is PKHD-type hydroxylase Dtpsy_0528 (Acidovorax ebreus (strain TPSY) (Diaphorobacter sp. (strain TPSY))).